The following is a 784-amino-acid chain: Lon protease (784 aa).

The Lon N-terminal domain occupies 6–207; it reads LPLMALRDMV…TVITTLTSNI (202 aa). 356–363 is an ATP binding site; sequence GPPGVGKT. A Lon proteolytic domain is found at 592-773; the sequence is EDQIGSTTGL…DQVLKHALVE (182 aa). Residues serine 679 and lysine 722 contribute to the active site.

The protein belongs to the peptidase S16 family. Homohexamer. Organized in a ring with a central cavity.

It localises to the cytoplasm. The catalysed reaction is Hydrolysis of proteins in presence of ATP.. ATP-dependent serine protease that mediates the selective degradation of mutant and abnormal proteins as well as certain short-lived regulatory proteins. Required for cellular homeostasis and for survival from DNA damage and developmental changes induced by stress. Degrades polypeptides processively to yield small peptide fragments that are 5 to 10 amino acids long. Binds to DNA in a double-stranded, site-specific manner. The polypeptide is Lon protease (Rickettsia typhi (strain ATCC VR-144 / Wilmington)).